The primary structure comprises 238 residues: Ribonuclease PH (238 aa).

Phosphate contacts are provided by residues Arg-86 and 124-126 (GTR).

It belongs to the RNase PH family. In terms of assembly, homohexameric ring arranged as a trimer of dimers.

The catalysed reaction is tRNA(n+1) + phosphate = tRNA(n) + a ribonucleoside 5'-diphosphate. Functionally, phosphorolytic 3'-5' exoribonuclease that plays an important role in tRNA 3'-end maturation. Removes nucleotide residues following the 3'-CCA terminus of tRNAs; can also add nucleotides to the ends of RNA molecules by using nucleoside diphosphates as substrates, but this may not be physiologically important. Probably plays a role in initiation of 16S rRNA degradation (leading to ribosome degradation) during starvation. This chain is Ribonuclease PH, found in Geobacter sulfurreducens (strain ATCC 51573 / DSM 12127 / PCA).